A 285-amino-acid chain; its full sequence is MDKIKVGLQYWIPQHALTRLVGKLASARAGSLTTAIIRWFIKQYNVNMDEALHSDPTHFKTFNEFFVRELKAGVRPIAEGEKVITHPADACVSQFGAIEYGKLIQAKGHTYSAQELLGGDAKLAEEFRDGDFATLYLSPRDYHRVHMPCDGTLRQMIYVPGDLFSVNPLTAENVPNLFARNERVVCIFDTEFGPMAQVLVGATIVGSIELVWAGTVTPPRGNTVYRWDYPANGNQAVVLKKGEEMGRFKLGSTVINLFAKQAIRFDDSMALGAPTRMGEPYAHQA.

Active-site charge relay system; for autoendoproteolytic cleavage activity residues include D89, H146, and S252. S252 (schiff-base intermediate with substrate; via pyruvic acid; for decarboxylase activity) is an active-site residue. The residue at position 252 (S252) is a Pyruvic acid (Ser); by autocatalysis.

Belongs to the phosphatidylserine decarboxylase family. PSD-B subfamily. Prokaryotic type I sub-subfamily. Heterodimer of a large membrane-associated beta subunit and a small pyruvoyl-containing alpha subunit. It depends on pyruvate as a cofactor. Is synthesized initially as an inactive proenzyme. Formation of the active enzyme involves a self-maturation process in which the active site pyruvoyl group is generated from an internal serine residue via an autocatalytic post-translational modification. Two non-identical subunits are generated from the proenzyme in this reaction, and the pyruvate is formed at the N-terminus of the alpha chain, which is derived from the carboxyl end of the proenzyme. The autoendoproteolytic cleavage occurs by a canonical serine protease mechanism, in which the side chain hydroxyl group of the serine supplies its oxygen atom to form the C-terminus of the beta chain, while the remainder of the serine residue undergoes an oxidative deamination to produce ammonia and the pyruvoyl prosthetic group on the alpha chain. During this reaction, the Ser that is part of the protease active site of the proenzyme becomes the pyruvoyl prosthetic group, which constitutes an essential element of the active site of the mature decarboxylase.

It localises to the cell membrane. It carries out the reaction a 1,2-diacyl-sn-glycero-3-phospho-L-serine + H(+) = a 1,2-diacyl-sn-glycero-3-phosphoethanolamine + CO2. The protein operates within phospholipid metabolism; phosphatidylethanolamine biosynthesis; phosphatidylethanolamine from CDP-diacylglycerol: step 2/2. In terms of biological role, catalyzes the formation of phosphatidylethanolamine (PtdEtn) from phosphatidylserine (PtdSer). This is Phosphatidylserine decarboxylase proenzyme from Vibrio cholerae serotype O1 (strain ATCC 39541 / Classical Ogawa 395 / O395).